The sequence spans 142 residues: MVLSGEDKSNIKAAWGKIGGHGAEYGAEALERMFASFPTTKTYFPHFDVSHGSAQVKGHGKKVADALASAAGHLDDLPGALSALSDLHAHKLRVDPVNFKLLSHCLLVTLASHHPADFTPAVHASLDKFLASVSTVLTSKYR.

The Globin domain occupies 2-142 (VLSGEDKSNI…VSTVLTSKYR (141 aa)). Phosphoserine is present on S4. N6-succinyllysine is present on residues K8 and K12. K17 carries the N6-acetyllysine; alternate modification. K17 is subject to N6-succinyllysine; alternate. Position 25 is a phosphotyrosine (Y25). At S36 the chain carries Phosphoserine. N6-succinyllysine is present on K41. S50 bears the Phosphoserine mark. H59 is a binding site for O2. H88 is a heme b binding site. Phosphoserine is present on S103. T109 carries the phosphothreonine modification. Residues S112, S125, and S132 each carry the phosphoserine modification. T135 and T138 each carry phosphothreonine. S139 bears the Phosphoserine mark.

Belongs to the globin family. Heterotetramer of two alpha chains and two beta chains. In terms of tissue distribution, red blood cells.

Involved in oxygen transport from the lung to the various peripheral tissues. Its function is as follows. Hemopressin acts as an antagonist peptide of the cannabinoid receptor CNR1. Hemopressin-binding efficiently blocks cannabinoid receptor CNR1 and subsequent signaling. This Mus musculus (Mouse) protein is Hemoglobin subunit alpha (Hba).